We begin with the raw amino-acid sequence, 852 residues long: Leucine--tRNA ligase (852 aa).

The 'HIGH' region motif lies at 42-52 (PYPSGKLHMGH). Positions 586–606 (NKYVPADQVDPNDPKDPETGE) are disordered. Residues 614–618 (KMSKS) carry the 'KMSKS' region motif. Position 617 (lysine 617) interacts with ATP.

This sequence belongs to the class-I aminoacyl-tRNA synthetase family.

It localises to the cytoplasm. The enzyme catalyses tRNA(Leu) + L-leucine + ATP = L-leucyl-tRNA(Leu) + AMP + diphosphate. The sequence is that of Leucine--tRNA ligase from Picosynechococcus sp. (strain ATCC 27264 / PCC 7002 / PR-6) (Agmenellum quadruplicatum).